A 627-amino-acid chain; its full sequence is Pescadillo homolog (627 aa).

A BRCT domain is found at 321 to 414; the sequence is RLRTLFKGLK…QLLPTNKYFI (94 aa). Disordered stretches follow at residues 450–469, 488–566, and 595–627; these read HAQS…ETVD, YKKY…MVKP, and TIEA…KLGK. Phosphoserine occurs at positions 453 and 457. Composition is skewed to acidic residues over residues 454-469 and 497-521; these read DDDS…ETVD and VNED…EELD. The segment covering 522–533 has biased composition (basic and acidic residues); sequence EKTKRLQEEKQK. The segment covering 540 to 549 has biased composition (basic residues); the sequence is KVHKVNKRQV. Composition is skewed to basic and acidic residues over residues 550-559 and 595-615; these read HKAEVDEHRL and TIEA…RKEA. Residues 582 to 625 adopt a coiled-coil conformation; sequence KEKEEWLLRKKRRTIEASEKEARKTAKREARKEAAAAAAKASKL. Positions 616–627 are enriched in low complexity; the sequence is AAAAAKASKLGK.

It belongs to the pescadillo family.

Its subcellular location is the nucleus. The protein localises to the nucleolus. It localises to the nucleoplasm. Its function is as follows. Required for maturation of ribosomal RNAs and formation of the large ribosomal subunit. The protein is Pescadillo homolog of Drosophila simulans (Fruit fly).